Consider the following 455-residue polypeptide: Bifunctional protein GlmU (455 aa).

The pyrophosphorylase stretch occupies residues 1 to 227 (MGLSVIILAA…CEEVQGVNDR (227 aa)). UDP-N-acetyl-alpha-D-glucosamine-binding positions include 8 to 11 (LAAG), Lys-22, Gln-73, 78 to 79 (GT), 100 to 102 (YGD), Gly-137, Glu-152, Asn-167, and Asn-225. Asp-102 lines the Mg(2+) pocket. Asn-225 lines the Mg(2+) pocket. Positions 228 to 248 (WELTKLERYYQRLMAKKLSLA) are linker. Residues 249-455 (GVTIIDPERF…KGWHRPTKKE (207 aa)) form an N-acetyltransferase region. Residues Arg-332 and Lys-350 each coordinate UDP-N-acetyl-alpha-D-glucosamine. The active-site Proton acceptor is the His-362. Residues Tyr-365 and Asn-376 each contribute to the UDP-N-acetyl-alpha-D-glucosamine site. Acetyl-CoA-binding positions include Ala-379, 385-386 (NY), Ser-404, Ala-422, and Arg-439.

It in the N-terminal section; belongs to the N-acetylglucosamine-1-phosphate uridyltransferase family. The protein in the C-terminal section; belongs to the transferase hexapeptide repeat family. In terms of assembly, homotrimer. It depends on Mg(2+) as a cofactor.

The protein resides in the cytoplasm. It catalyses the reaction alpha-D-glucosamine 1-phosphate + acetyl-CoA = N-acetyl-alpha-D-glucosamine 1-phosphate + CoA + H(+). The catalysed reaction is N-acetyl-alpha-D-glucosamine 1-phosphate + UTP + H(+) = UDP-N-acetyl-alpha-D-glucosamine + diphosphate. Its pathway is nucleotide-sugar biosynthesis; UDP-N-acetyl-alpha-D-glucosamine biosynthesis; N-acetyl-alpha-D-glucosamine 1-phosphate from alpha-D-glucosamine 6-phosphate (route II): step 2/2. It functions in the pathway nucleotide-sugar biosynthesis; UDP-N-acetyl-alpha-D-glucosamine biosynthesis; UDP-N-acetyl-alpha-D-glucosamine from N-acetyl-alpha-D-glucosamine 1-phosphate: step 1/1. It participates in bacterial outer membrane biogenesis; LPS lipid A biosynthesis. Functionally, catalyzes the last two sequential reactions in the de novo biosynthetic pathway for UDP-N-acetylglucosamine (UDP-GlcNAc). The C-terminal domain catalyzes the transfer of acetyl group from acetyl coenzyme A to glucosamine-1-phosphate (GlcN-1-P) to produce N-acetylglucosamine-1-phosphate (GlcNAc-1-P), which is converted into UDP-GlcNAc by the transfer of uridine 5-monophosphate (from uridine 5-triphosphate), a reaction catalyzed by the N-terminal domain. In Coxiella burnetii (strain CbuK_Q154) (Coxiella burnetii (strain Q154)), this protein is Bifunctional protein GlmU.